The chain runs to 664 residues: MDNKLEKMKELVEELNQYAYEYYVLDNPSISDKEYDLKYDELVILEKKTEVTLPYSPTQRVGDKILGEFSKYTHKGRLWSLDKAQNMEQLIEWHNRNLKVIEQYNSMSEDKLPELRYIVTKKFDGLTVNCTYDENGILIKSATRGTGIIGEDITAQIKTIKTVPLKIKNNHIIEVHGEAIMTKTAFEEYNKAAQVPLKNLRNGAAGALRNLDIKETARRNLSAFFYDVGYNEGSEFKNYREMMNFIRNMGLPQDKYIKECTNMEEVEKEIEYIESIREELDYDIDGAVIVVDDIKTREILGYTIKFPKWAIAYKFEAKEITTRLLDVEWNVGRSGRVTPTALLEPVELGGVTVKRATLNNMDDIKRKNVKLGAKVLVRRSNDVIPEIMGVAEESLEESKEIQAPDRCPYCNSHLVQNGVHYYCENTLSCKPQMVKSIVHFASREAMNIAGFSEKTAEQLFEKLDIKSIADLYKIKKEELLTLEKFKDKKSQNLINAIQNSKNCDLASFIYALGIPNVGKKTANDLVMKFKTLESIKNTTIEQLVEVPDVGEIVAKSIYDFFEDEKIISNIEELLNLGVKPYYEEERIDENPFMDKTIVVTGSLNNYSRGEIKDKLQSLGAKVSSSVSKNTDYVLVGEKPGSKYEKAIELGVKVINEEEFSNKIK.

NAD(+) is bound by residues 32–36 (DKEYD) and 80–81 (SL). Catalysis depends on K122, which acts as the N6-AMP-lysine intermediate. Residues R144, E178, and K314 each contribute to the NAD(+) site. Zn(2+)-binding residues include C407, C410, C423, and C429. Residues 587-664 (IDENPFMDKT…NEEEFSNKIK (78 aa)) enclose the BRCT domain.

Belongs to the NAD-dependent DNA ligase family. LigA subfamily. Requires Mg(2+) as cofactor. Mn(2+) serves as cofactor.

The catalysed reaction is NAD(+) + (deoxyribonucleotide)n-3'-hydroxyl + 5'-phospho-(deoxyribonucleotide)m = (deoxyribonucleotide)n+m + AMP + beta-nicotinamide D-nucleotide.. Functionally, DNA ligase that catalyzes the formation of phosphodiester linkages between 5'-phosphoryl and 3'-hydroxyl groups in double-stranded DNA using NAD as a coenzyme and as the energy source for the reaction. It is essential for DNA replication and repair of damaged DNA. The chain is DNA ligase from Clostridium botulinum (strain Loch Maree / Type A3).